The primary structure comprises 144 residues: Large ribosomal subunit protein uL16 (144 aa).

Positions 1–19 (MLLPKRVKYRRQHRPKTTG) are enriched in basic residues. Residues 1–26 (MLLPKRVKYRRQHRPKTTGRSKGGNE) form a disordered region.

It belongs to the universal ribosomal protein uL16 family. As to quaternary structure, part of the 50S ribosomal subunit.

Its function is as follows. Binds 23S rRNA and is also seen to make contacts with the A and possibly P site tRNAs. This Macrococcus caseolyticus (strain JCSC5402) (Macrococcoides caseolyticum) protein is Large ribosomal subunit protein uL16.